Here is a 397-residue protein sequence, read N- to C-terminus: Transcription factor TGAL6 (397 aa).

The bZIP domain occupies 104–148 (PDKVLRRLAQNREAARKSRLRKKAYIQQLETSRLKLAQLEQELQR). Residues 106-126 (KVLRRLAQNREAARKSRLRKK) are basic motif. A leucine-zipper region spans residues 132–146 (LETSRLKLAQLEQEL). The DOG1 domain occupies 175–390 (ALGFEIKYSH…RALSSLWAAR (216 aa)).

Belongs to the bZIP family.

It localises to the nucleus. Its function is as follows. Transcriptional regulator involved in defense response. The sequence is that of Transcription factor TGAL6 from Oryza sativa subsp. japonica (Rice).